We begin with the raw amino-acid sequence, 170 residues long: ATP synthase subunit b (170 aa).

A helical transmembrane segment spans residues 30 to 50 (FFFVLAIFLVVLGVIGTFVVP).

It belongs to the ATPase B chain family. In terms of assembly, F-type ATPases have 2 components, F(1) - the catalytic core - and F(0) - the membrane proton channel. F(1) has five subunits: alpha(3), beta(3), gamma(1), delta(1), epsilon(1). F(0) has three main subunits: a(1), b(2) and c(10-14). The alpha and beta chains form an alternating ring which encloses part of the gamma chain. F(1) is attached to F(0) by a central stalk formed by the gamma and epsilon chains, while a peripheral stalk is formed by the delta and b chains.

Its subcellular location is the cell membrane. Functionally, f(1)F(0) ATP synthase produces ATP from ADP in the presence of a proton or sodium gradient. F-type ATPases consist of two structural domains, F(1) containing the extramembraneous catalytic core and F(0) containing the membrane proton channel, linked together by a central stalk and a peripheral stalk. During catalysis, ATP synthesis in the catalytic domain of F(1) is coupled via a rotary mechanism of the central stalk subunits to proton translocation. In terms of biological role, component of the F(0) channel, it forms part of the peripheral stalk, linking F(1) to F(0). The polypeptide is ATP synthase subunit b (Mycobacterium leprae (strain TN)).